Here is a 489-residue protein sequence, read N- to C-terminus: Betaine aldehyde dehydrogenase (489 aa).

2 residues coordinate K(+): threonine 26 and aspartate 93. 150–152 (GAW) serves as a coordination point for NAD(+). Catalysis depends on lysine 162, which acts as the Charge relay system. 176–179 (KPSE) provides a ligand contact to NAD(+). Residue valine 180 participates in K(+) binding. 229–232 (GVET) is an NAD(+) binding site. Leucine 245 provides a ligand contact to K(+). The active-site Proton acceptor is glutamate 251. Residues glycine 253, cysteine 285, and glutamate 386 each contribute to the NAD(+) site. Cysteine 285 serves as the catalytic Nucleophile. Cysteine 285 is modified (cysteine sulfenic acid (-SOH)). 2 residues coordinate K(+): lysine 456 and glycine 459. Glutamate 463 functions as the Charge relay system in the catalytic mechanism.

Belongs to the aldehyde dehydrogenase family. As to quaternary structure, dimer of dimers. K(+) is required as a cofactor.

The enzyme catalyses betaine aldehyde + NAD(+) + H2O = glycine betaine + NADH + 2 H(+). It participates in amine and polyamine biosynthesis; betaine biosynthesis via choline pathway; betaine from betaine aldehyde: step 1/1. Functionally, involved in the biosynthesis of the osmoprotectant glycine betaine. Catalyzes the irreversible oxidation of betaine aldehyde to the corresponding acid. This chain is Betaine aldehyde dehydrogenase, found in Burkholderia multivorans (strain ATCC 17616 / 249).